The following is a 236-amino-acid chain: 7-cyano-7-deazaguanine synthase (236 aa).

Residue cysteine 7–alanine 17 coordinates ATP. Zn(2+)-binding residues include cysteine 185, cysteine 193, cysteine 196, and cysteine 199.

It belongs to the QueC family. Requires Zn(2+) as cofactor.

It carries out the reaction 7-carboxy-7-deazaguanine + NH4(+) + ATP = 7-cyano-7-deazaguanine + ADP + phosphate + H2O + H(+). The protein operates within purine metabolism; 7-cyano-7-deazaguanine biosynthesis. Catalyzes the ATP-dependent conversion of 7-carboxy-7-deazaguanine (CDG) to 7-cyano-7-deazaguanine (preQ(0)). The sequence is that of 7-cyano-7-deazaguanine synthase from Sinorhizobium fredii (strain NBRC 101917 / NGR234).